Consider the following 178-residue polypeptide: MTKKEQALIEQYGKSLVEVASEHHSLDTLQADVLAILETFETTNLDQSLSSLAVPHAEKIKLLTLLKGNNSVYMNNFLNLILQNEREAYLYQMLQAVLNEIAIVSNQYDVTVTSSLPLTEEQKSRVRAVVAKKFAVTAGRLIEKVDPSLIGGFIISVNNKVIDTSIRRQLQAFKMNLK.

The protein belongs to the ATPase delta chain family. As to quaternary structure, F-type ATPases have 2 components, F(1) - the catalytic core - and F(0) - the membrane proton channel. F(1) has five subunits: alpha(3), beta(3), gamma(1), delta(1), epsilon(1). F(0) has three main subunits: a(1), b(2) and c(10-14). The alpha and beta chains form an alternating ring which encloses part of the gamma chain. F(1) is attached to F(0) by a central stalk formed by the gamma and epsilon chains, while a peripheral stalk is formed by the delta and b chains.

Its subcellular location is the cell membrane. F(1)F(0) ATP synthase produces ATP from ADP in the presence of a proton or sodium gradient. F-type ATPases consist of two structural domains, F(1) containing the extramembraneous catalytic core and F(0) containing the membrane proton channel, linked together by a central stalk and a peripheral stalk. During catalysis, ATP synthesis in the catalytic domain of F(1) is coupled via a rotary mechanism of the central stalk subunits to proton translocation. In terms of biological role, this protein is part of the stalk that links CF(0) to CF(1). It either transmits conformational changes from CF(0) to CF(1) or is implicated in proton conduction. The protein is ATP synthase subunit delta of Streptococcus pyogenes serotype M3 (strain ATCC BAA-595 / MGAS315).